Consider the following 221-residue polypeptide: Histone H1C (221 aa).

Disordered regions lie at residues 1–43 (MSDP…PPVS) and 113–221 (AAKK…AKKA). One can recognise an H15 domain in the interval 38–112 (THPPVSEMVF…GALGSFKLPA (75 aa)). Basic residues-rich tracts occupy residues 141-167 (KVKK…KTTK) and 175-221 (AAKK…AKKA).

It belongs to the histone H1/H5 family.

It is found in the nucleus. The protein localises to the chromosome. In terms of biological role, histones H1 are necessary for the condensation of nucleosome chains into higher-order structures. The polypeptide is Histone H1C (Chironomus tentans (Midge)).